The sequence spans 162 residues: Cyclic pyranopterin monophosphate synthase (162 aa).

Residues 75–77 (LCH) and 113–114 (ME) contribute to the substrate site. Asp128 is a catalytic residue.

Belongs to the MoaC family. Homohexamer; trimer of dimers.

It carries out the reaction (8S)-3',8-cyclo-7,8-dihydroguanosine 5'-triphosphate = cyclic pyranopterin phosphate + diphosphate. It functions in the pathway cofactor biosynthesis; molybdopterin biosynthesis. Functionally, catalyzes the conversion of (8S)-3',8-cyclo-7,8-dihydroguanosine 5'-triphosphate to cyclic pyranopterin monophosphate (cPMP). This Burkholderia ambifaria (strain MC40-6) protein is Cyclic pyranopterin monophosphate synthase.